The following is a 121-amino-acid chain: UPF0344 protein BC_1150 (121 aa).

Transmembrane regions (helical) follow at residues 6-26, 38-58, 65-85, and 92-112; these read ITAW…YSAG, LMYI…VKTA, WYGL…MVLV, and PTGA…YLGL.

The protein belongs to the UPF0344 family.

Its subcellular location is the cell membrane. The polypeptide is UPF0344 protein BC_1150 (Bacillus cereus (strain ATCC 14579 / DSM 31 / CCUG 7414 / JCM 2152 / NBRC 15305 / NCIMB 9373 / NCTC 2599 / NRRL B-3711)).